The sequence spans 829 residues: Periplasmic nitrate reductase (829 aa).

A signal peptide (tat-type signal) is located at residues 1-30 (MKMTRRAFVKANAAASAAAVAGITLPASAA). In terms of domain architecture, 4Fe-4S Mo/W bis-MGD-type spans 41–97 (ITWDKAPCRFCGTGCSVLVGTQNGKVVATQGDPEAPVNKGLNCIKGYFLSKIMYGQD). [4Fe-4S] cluster-binding residues include Cys-48, Cys-51, Cys-55, and Cys-83. Residues Lys-85, Gln-152, Asn-177, Cys-181, 214–221 (WGSNMAEM), 245–249 (STYYH), 264–266 (QSD), Met-374, Gln-378, Asn-484, 510–511 (SD), Lys-533, Asp-560, and 718–727 (TGRVLEHWHT) each bind Mo-bis(molybdopterin guanine dinucleotide). Phe-794 is a substrate binding site. Mo-bis(molybdopterin guanine dinucleotide)-binding residues include Asn-802 and Lys-819.

The protein belongs to the prokaryotic molybdopterin-containing oxidoreductase family. NasA/NapA/NarB subfamily. In terms of assembly, component of the periplasmic nitrate reductase NapAB complex composed of NapA and NapB. [4Fe-4S] cluster is required as a cofactor. Requires Mo-bis(molybdopterin guanine dinucleotide) as cofactor. In terms of processing, predicted to be exported by the Tat system. The position of the signal peptide cleavage has not been experimentally proven.

It is found in the periplasm. The enzyme catalyses 2 Fe(II)-[cytochrome] + nitrate + 2 H(+) = 2 Fe(III)-[cytochrome] + nitrite + H2O. Catalytic subunit of the periplasmic nitrate reductase complex NapAB. Receives electrons from NapB and catalyzes the reduction of nitrate to nitrite. This Vibrio vulnificus (strain YJ016) protein is Periplasmic nitrate reductase.